A 365-amino-acid chain; its full sequence is Histidinol-phosphate aminotransferase (365 aa).

Lys220 is modified (N6-(pyridoxal phosphate)lysine).

This sequence belongs to the class-II pyridoxal-phosphate-dependent aminotransferase family. Histidinol-phosphate aminotransferase subfamily. Homodimer. Requires pyridoxal 5'-phosphate as cofactor.

It catalyses the reaction L-histidinol phosphate + 2-oxoglutarate = 3-(imidazol-4-yl)-2-oxopropyl phosphate + L-glutamate. It participates in amino-acid biosynthesis; L-histidine biosynthesis; L-histidine from 5-phospho-alpha-D-ribose 1-diphosphate: step 7/9. This is Histidinol-phosphate aminotransferase (hisC) from Xylella fastidiosa (strain Temecula1 / ATCC 700964).